Reading from the N-terminus, the 102-residue chain is Integration host factor subunit alpha (102 aa).

It belongs to the bacterial histone-like protein family. Heterodimer of an alpha and a beta chain.

Functionally, this protein is one of the two subunits of integration host factor, a specific DNA-binding protein that functions in genetic recombination as well as in transcriptional and translational control. In Albidiferax ferrireducens (strain ATCC BAA-621 / DSM 15236 / T118) (Rhodoferax ferrireducens), this protein is Integration host factor subunit alpha.